A 123-amino-acid polypeptide reads, in one-letter code: Small ribosomal subunit protein uS12cz/uS12cy (123 aa).

The protein belongs to the universal ribosomal protein uS12 family. Part of the 30S ribosomal subunit.

Its subcellular location is the plastid. The protein resides in the chloroplast. Functionally, with S4 and S5 plays an important role in translational accuracy. Located at the interface of the 30S and 50S subunits. The chain is Small ribosomal subunit protein uS12cz/uS12cy (rps12-A) from Phaseolus vulgaris (Kidney bean).